Reading from the N-terminus, the 130-residue chain is UPF0225 protein CE1570 (130 aa).

This sequence belongs to the UPF0225 family.

The sequence is that of UPF0225 protein CE1570 from Corynebacterium efficiens (strain DSM 44549 / YS-314 / AJ 12310 / JCM 11189 / NBRC 100395).